The primary structure comprises 349 residues: E3 ubiquitin-protein ligase rnf146 (349 aa).

A disordered region spans residues 1 to 21 (MASCGEVDHSVSSLPSSKKGS). Low complexity predominate over residues 10-21 (SVSSLPSSKKGS). The RING-type zinc-finger motif lies at 41–79 (CAICLQSCVHPVQLPCRHVFCFLCVKGASWQSKRCALCR). Residues 97-173 (ELKTGGRGAT…EHGRRRKIKR (77 aa)) enclose the WWE domain. Y113, R116, W120, Y150, Q159, R169, and K181 together coordinate a glycoprotein. 2 disordered regions span residues 226–251 (TTVL…SPSL) and 264–349 (DAPE…CTEV). The segment covering 283 to 292 (SMSSSPNTYA) has biased composition (polar residues). Residues 298 to 307 (WSDDEGDGEA) show a composition bias toward acidic residues. A compositionally biased stretch (basic and acidic residues) spans 308 to 317 (VEPREQRLRL).

The protein resides in the cytoplasm. Its subcellular location is the cytosol. It is found in the nucleus. The catalysed reaction is S-ubiquitinyl-[E2 ubiquitin-conjugating enzyme]-L-cysteine + [acceptor protein]-L-lysine = [E2 ubiquitin-conjugating enzyme]-L-cysteine + N(6)-ubiquitinyl-[acceptor protein]-L-lysine.. The protein operates within protein modification; protein ubiquitination. In terms of biological role, E3 ubiquitin-protein ligase that specifically binds poly-ADP-ribosylated proteins and mediates their ubiquitination and subsequent degradation. May regulate many important biological processes, such as cell survival and DNA damage response. Acts as an activator of the Wnt signaling pathway by mediating the ubiquitination of poly-ADP-ribosylated proteins. Neuroprotective protein. Protects against cell death induced by DNA damaging agents and rescues cells from G1 arrest. Promotes cell survival after gamma-irradiation. Facilitates DNA repair. The sequence is that of E3 ubiquitin-protein ligase rnf146 (rnf146) from Salmo salar (Atlantic salmon).